A 321-amino-acid chain; its full sequence is ATP-dependent 6-phosphofructokinase (321 aa).

Residue glycine 10 coordinates ATP. Arginine 20–arginine 24 contacts ADP. Residues arginine 71–aspartate 72 and glycine 101–threonine 104 each bind ATP. Residue glutamate 102 coordinates Mg(2+). Residue threonine 125–aspartate 127 participates in substrate binding. Aspartate 127 serves as the catalytic Proton acceptor. Arginine 154 is an ADP binding site. Substrate contacts are provided by residues arginine 162 and methionine 169–arginine 171. Residues glycine 185–glutamate 187 and lysine 213–histidine 215 each bind ADP. Substrate is bound by residues glutamate 222, arginine 246, and histidine 252–arginine 255.

Belongs to the phosphofructokinase type A (PFKA) family. ATP-dependent PFK group I subfamily. Prokaryotic clade 'B1' sub-subfamily. In terms of assembly, homotetramer. The cofactor is Mg(2+).

It localises to the cytoplasm. The enzyme catalyses beta-D-fructose 6-phosphate + ATP = beta-D-fructose 1,6-bisphosphate + ADP + H(+). The protein operates within carbohydrate degradation; glycolysis; D-glyceraldehyde 3-phosphate and glycerone phosphate from D-glucose: step 3/4. Allosterically activated by ADP and other diphosphonucleosides, and allosterically inhibited by phosphoenolpyruvate. Its function is as follows. Catalyzes the phosphorylation of D-fructose 6-phosphate to fructose 1,6-bisphosphate by ATP, the first committing step of glycolysis. In Aquifex aeolicus (strain VF5), this protein is ATP-dependent 6-phosphofructokinase.